We begin with the raw amino-acid sequence, 200 residues long: Large ribosomal subunit protein uL4 (200 aa).

Residues 43-70 (RAQKTRAEVSGSGKKPWRQKGTGRARSG) are disordered.

Belongs to the universal ribosomal protein uL4 family. As to quaternary structure, part of the 50S ribosomal subunit.

Its function is as follows. One of the primary rRNA binding proteins, this protein initially binds near the 5'-end of the 23S rRNA. It is important during the early stages of 50S assembly. It makes multiple contacts with different domains of the 23S rRNA in the assembled 50S subunit and ribosome. Functionally, forms part of the polypeptide exit tunnel. This chain is Large ribosomal subunit protein uL4, found in Glaesserella parasuis serovar 5 (strain SH0165) (Haemophilus parasuis).